We begin with the raw amino-acid sequence, 238 residues long: MRPAGRSNNQVRPVTLTRNYTKHAEGSVLVEFGDTKVLCTASIEEGVPRFLKGQGQGWITAEYGMLPRSTHTRNAREAAKGKQGGRTMEIQRLIARALRAAVDLKALGEFTITLDCDVLQADGGTRTASITGACVALADALQKLVENGKLKTNPMKGMVAAVSVGIVNGEAICDLEYVEDSAAETDMNVVMTEDGRIIEVQGTAEGEPFTHEELLTLLALARGGIESIVATQKAALAN.

Phosphate-binding positions include R86 and 124-126 (GTR).

This sequence belongs to the RNase PH family. In terms of assembly, homohexameric ring arranged as a trimer of dimers.

It catalyses the reaction tRNA(n+1) + phosphate = tRNA(n) + a ribonucleoside 5'-diphosphate. Its function is as follows. Phosphorolytic 3'-5' exoribonuclease that plays an important role in tRNA 3'-end maturation. Removes nucleotide residues following the 3'-CCA terminus of tRNAs; can also add nucleotides to the ends of RNA molecules by using nucleoside diphosphates as substrates, but this may not be physiologically important. Probably plays a role in initiation of 16S rRNA degradation (leading to ribosome degradation) during starvation. The sequence is that of Ribonuclease PH from Shigella flexneri serotype 5b (strain 8401).